The primary structure comprises 87 residues: Prohibitin 1 (87 aa).

Position 8 is a phosphothreonine (Thr8). An N6-acetyllysine modification is found at Lys62. At Tyr83 the chain carries Phosphotyrosine.

It belongs to the prohibitin family. In terms of assembly, the mitochondrial prohibitin complex consists of two subunits (PHB1 and PHB2), assembled into a membrane-associated ring-shaped supercomplex of approximately 1 mDa. Interacts with STOML2. Interacts with MAP1LC3B (membrane-bound form LC3-II); the interaction requires PHB2 and takes place upon Parkin-mediated mitochondrial damage. Interacts with STAT3 (unphosphorylated or phosphorylated at 'Ser-727'). Interacts with CLPB. Interacts with CD86 (via cytoplasmic domain); the interactions increases after priming with CD40.

It is found in the mitochondrion inner membrane. The protein localises to the nucleus. The protein resides in the cytoplasm. Its subcellular location is the cell membrane. In terms of biological role, protein with pleiotropic attributes mediated in a cell-compartment- and tissue-specific manner, which include the plasma membrane-associated cell signaling functions, mitochondrial chaperone, and transcriptional co-regulator of transcription factors in the nucleus. Plays a role in adipose tissue and glucose homeostasis in a sex-specific manner. Contributes to pulmonary vascular remodeling by accelerating proliferation of pulmonary arterial smooth muscle cells. Its function is as follows. In the mitochondria, together with PHB2, forms large ring complexes (prohibitin complexes) in the inner mitochondrial membrane (IMM) and functions as a chaperone protein that stabilizes mitochondrial respiratory enzymes and maintains mitochondrial integrity in the IMM, which is required for mitochondrial morphogenesis, neuronal survival, and normal lifespan. The prohibitin complex, with DNAJC19, regulates cardiolipin remodeling and the protein turnover of OMA1 in a cardiolipin-binding manner. Regulates mitochondrial respiration activity playing a role in cellular aging. The prohibitin complex plays a role of mitophagy receptor involved in targeting mitochondria for autophagic degradation. Involved in mitochondrial-mediated antiviral innate immunity, activates RIG-I-mediated signal transduction and production of IFNB1 and proinflammatory cytokine IL6. Functionally, in the nucleus, acts as a transcription coregulator, enhances promoter binding by TP53, a transcription factor it activates, but reduces the promoter binding by E2F1, a transcription factor it represses. Interacts with STAT3 to affect IL17 secretion in T-helper Th17 cells. In the plasma membrane, cooperates with CD86 to mediate CD86-signaling in B lymphocytes that regulates the level of IgG1 produced through the activation of distal signaling intermediates. Upon CD40 engagement, required to activate NF-kappa-B signaling pathway via phospholipase C and protein kinase C activation. This is Prohibitin 1 (PHB1) from Mesocricetus auratus (Golden hamster).